The following is a 205-amino-acid chain: Mediator of RNA polymerase II transcription subunit 29 (205 aa).

A compositionally biased stretch (low complexity) spans 1–27 (MNPNMNMMQMSGPPMMQVSPMMQSSPQ). The interval 1 to 65 (MNPNMNMMQM…QQQQQQAEKL (65 aa)) is disordered. Residues 28 to 38 (PMMPTGPPGPV) are compositionally biased toward pro residues. Positions 39-61 (PMQQQHQQQQQQQQQQQQQQQQQ) are enriched in low complexity.

Belongs to the Mediator complex subunit 29 family. Component of the Mediator complex.

The protein resides in the nucleus. Functionally, component of the Mediator complex, a coactivator involved in the regulated transcription of nearly all RNA polymerase II-dependent genes. Mediator functions as a bridge to convey information from gene-specific regulatory proteins to the basal RNA polymerase II transcription machinery. Mediator is recruited to promoters by direct interactions with regulatory proteins and serves as a scaffold for the assembly of a functional preinitiation complex with RNA polymerase II and the general transcription factors. The polypeptide is Mediator of RNA polymerase II transcription subunit 29 (ix) (Drosophila virilis (Fruit fly)).